An 855-amino-acid chain; its full sequence is Photoactivated adenylate cyclase subunit beta-like protein 1224-5/9F (855 aa).

The BLUF 1 domain occupies 56–149 (LRRLMYLSKG…GRMSGVWHMK (94 aa)). The disordered stretch occupies residues 420–444 (RPPIFDDTPKCNPRPRTPGCEGRQR). Residues 471–563 (VPTLTYISHA…RVYPSEWTLT (93 aa)) enclose the BLUF 2 domain. Basic and acidic residues predominate over residues 813-827 (RSGEKPLTEPEEAKL). Residues 813-855 (RSGEKPLTEPEEAKLDFSPGRVRHGDSGRRSNSAQGKLSIQVR) form a disordered region. Residues 842–855 (RSNSAQGKLSIQVR) are compositionally biased toward polar residues.

Heterotetramer of two alpha and two beta subunits.

The protein localises to the cell projection. It localises to the cilium. It is found in the flagellum. In Euglena gracilis, this protein is Photoactivated adenylate cyclase subunit beta-like protein 1224-5/9F.